Consider the following 160-residue polypeptide: Troponin C, skeletal muscle (160 aa).

Threonine 2 bears the N-acetylthreonine mark. EF-hand domains follow at residues 15–50 (EMIAEFKAAFDMFDADGGGDISVKELGTVMRMLGQT), 51–86 (PTKEELDAIIEEVDEDGSGTIDFEEFLVMMVRQMKE), 91–126 (KSEEELAECFRIFDRNADGYIDAEELAEIFRASGEH), and 127–160 (VTDEEIESLMKDGDKNNDGRIDFDEFLKMMEGVQ). Residues aspartate 28, aspartate 30, aspartate 34, glutamate 39, aspartate 64, aspartate 66, serine 68, threonine 70, glutamate 75, aspartate 104, asparagine 106, aspartate 108, tyrosine 110, glutamate 115, aspartate 140, asparagine 142, aspartate 144, arginine 146, and glutamate 151 each contribute to the Ca(2+) site.

The protein belongs to the troponin C family.

Troponin is the central regulatory protein of striated muscle contraction. Tn consists of three components: Tn-I which is the inhibitor of actomyosin ATPase, Tn-T which contains the binding site for tropomyosin and Tn-C. The binding of calcium to Tn-C abolishes the inhibitory action of Tn on actin filaments. The protein is Troponin C, skeletal muscle (TNNC2) of Oryctolagus cuniculus (Rabbit).